An 897-amino-acid polypeptide reads, in one-letter code: Major intrinsically disordered Notch2-binding receptor 1 (897 aa).

At 1–872 (MDAMPEYSLF…AEFRRAKACK (872 aa)) the chain is on the cytoplasmic side. Disordered stretches follow at residues 405 to 433 (AKDKPTASPSGFSKKSNGSKTKDMSSVAC), 450 to 502 (SINC…EDSE), and 688 to 766 (TRRS…PPKD). 2 stretches are compositionally biased toward polar residues: residues 411 to 423 (ASPSGFSKKSNGS) and 452 to 471 (NCPSFQSSNVDNGMSVGTQT). Positions 472-498 (EQHESRKVKDYPSQNKFKERPPFKHSE) are enriched in basic and acidic residues. The segment covering 697–724 (EENSATESKVASITNSPRDWRTVSYSSH) has biased composition (polar residues). Positions 725–756 (NGEEGKERDRHSEGKERHRKSREAERQYEAHQ) are enriched in basic and acidic residues. Residues 873–893 (IGALIFAAACTVILVIVVPIC) form a helical membrane-spanning segment. Topologically, residues 894 to 897 (TMKS) are extracellular.

This sequence belongs to the MINAR family.

It is found in the cell membrane. Intrinsically disordered protein which may negatively regulate mTOR signaling pathway by stabilizing the mTOR complex component DEPTOR. Negatively regulates angiogenesis. Negatively regulates cell growth. May play a role in neuronal development. This chain is Major intrinsically disordered Notch2-binding receptor 1 (minar1), found in Danio rerio (Zebrafish).